A 220-amino-acid chain; its full sequence is Ribose-5-phosphate isomerase A (220 aa).

Substrate contacts are provided by residues 28 to 31, 81 to 84, and 94 to 97; these read TGST, DGAD, and KGGG. Glu103 (proton acceptor) is an active-site residue. Residue Lys121 participates in substrate binding.

Belongs to the ribose 5-phosphate isomerase family. In terms of assembly, homodimer.

It catalyses the reaction aldehydo-D-ribose 5-phosphate = D-ribulose 5-phosphate. It functions in the pathway carbohydrate degradation; pentose phosphate pathway; D-ribose 5-phosphate from D-ribulose 5-phosphate (non-oxidative stage): step 1/1. Functionally, catalyzes the reversible conversion of ribose-5-phosphate to ribulose 5-phosphate. The sequence is that of Ribose-5-phosphate isomerase A from Coxiella burnetii (strain CbuK_Q154) (Coxiella burnetii (strain Q154)).